A 933-amino-acid chain; its full sequence is Protein translocase subunit SecA (933 aa).

ATP contacts are provided by residues Gln87, 105 to 109, and Asp515; that span reads GEGKT. Residues Cys917, Cys919, Cys928, and His929 each coordinate Zn(2+).

It belongs to the SecA family. Monomer and homodimer. Part of the essential Sec protein translocation apparatus which comprises SecA, SecYEG and auxiliary proteins SecDF-YajC and YidC. Zn(2+) serves as cofactor.

The protein resides in the cell inner membrane. Its subcellular location is the cytoplasm. The enzyme catalyses ATP + H2O + cellular proteinSide 1 = ADP + phosphate + cellular proteinSide 2.. In terms of biological role, part of the Sec protein translocase complex. Interacts with the SecYEG preprotein conducting channel. Has a central role in coupling the hydrolysis of ATP to the transfer of proteins into and across the cell membrane, serving both as a receptor for the preprotein-SecB complex and as an ATP-driven molecular motor driving the stepwise translocation of polypeptide chains across the membrane. The polypeptide is Protein translocase subunit SecA (Burkholderia cenocepacia (strain ATCC BAA-245 / DSM 16553 / LMG 16656 / NCTC 13227 / J2315 / CF5610) (Burkholderia cepacia (strain J2315))).